Here is a 131-residue protein sequence, read N- to C-terminus: Acyl carrier protein 3, mitochondrial (131 aa).

Residues 1-39 constitute a mitochondrion transit peptide; sequence MHCIRSSILQHLRLRVSVRPTSLLQNENGFKSIGIFNFT. The 76-residue stretch at 49 to 124 folds into the Carrier domain; sequence DQILSRVIEL…DVATYILSET (76 aa). Serine 84 carries the O-(pantetheine 4'-phosphoryl)serine modification.

This sequence belongs to the acyl carrier protein (ACP) family. Complex I is composed of at least 49 different subunits. 4'-phosphopantetheine is transferred from CoA to a specific serine of the apo-ACP-like protein.

The protein localises to the mitochondrion. The protein operates within lipid metabolism; fatty acid biosynthesis. Its function is as follows. Carrier of the growing fatty acid chain in fatty acid biosynthesis. May be involved in the synthesis of short and medium chain fatty acids. Accessory and non-catalytic subunit of the mitochondrial membrane respiratory chain NADH dehydrogenase (Complex I), which functions in the transfer of electrons from NADH to the respiratory chain. The polypeptide is Acyl carrier protein 3, mitochondrial (MTACP2) (Arabidopsis thaliana (Mouse-ear cress)).